The following is a 61-amino-acid chain: Small ribosomal subunit protein uS14 (61 aa).

Zn(2+) is bound by residues Cys24, Cys27, Cys40, and Cys43.

It belongs to the universal ribosomal protein uS14 family. Zinc-binding uS14 subfamily. Part of the 30S ribosomal subunit. Contacts proteins S3 and S10. Zn(2+) serves as cofactor.

Functionally, binds 16S rRNA, required for the assembly of 30S particles and may also be responsible for determining the conformation of the 16S rRNA at the A site. The chain is Small ribosomal subunit protein uS14 from Mesomycoplasma hyopneumoniae (strain 232) (Mycoplasma hyopneumoniae).